The sequence spans 543 residues: Formate--tetrahydrofolate ligase (543 aa).

54–61 provides a ligand contact to ATP; that stretch reads TPAGEGKT.

The protein belongs to the formate--tetrahydrofolate ligase family.

The enzyme catalyses (6S)-5,6,7,8-tetrahydrofolate + formate + ATP = (6R)-10-formyltetrahydrofolate + ADP + phosphate. It participates in one-carbon metabolism; tetrahydrofolate interconversion. The sequence is that of Formate--tetrahydrofolate ligase from Thermus thermophilus (strain ATCC BAA-163 / DSM 7039 / HB27).